Here is a 28-residue protein sequence, read N- to C-terminus: Trypsin inhibitor 4 (28 aa).

Intrachain disulfides connect Cys2/Cys19, Cys9/Cys21, and Cys15/Cys27.

This sequence belongs to the protease inhibitor I7 (squash-type serine protease inhibitor) family.

The protein localises to the secreted. Inhibits trypsin. This is Trypsin inhibitor 4 from Luffa aegyptiaca (Sponge gourd).